Here is a 229-residue protein sequence, read N- to C-terminus: Flagellar L-ring protein (229 aa).

The N-terminal stretch at 1 to 25 is a signal peptide; it reads MKQVRLPSSATVRAACAVAVAALAG. A lipid anchor (N-palmitoyl cysteine) is attached at Cys26. Residue Cys26 is the site of S-diacylglycerol cysteine attachment.

This sequence belongs to the FlgH family. The basal body constitutes a major portion of the flagellar organelle and consists of four rings (L,P,S, and M) mounted on a central rod.

It localises to the cell outer membrane. Its subcellular location is the bacterial flagellum basal body. Assembles around the rod to form the L-ring and probably protects the motor/basal body from shearing forces during rotation. This is Flagellar L-ring protein from Burkholderia orbicola (strain AU 1054).